The sequence spans 323 residues: Putative ABC transporter substrate-binding lipoprotein YhfQ (323 aa).

Residues 1 to 19 form the signal peptide; that stretch reads MKKTLIILTVLLLSVLTAA. C20 carries N-palmitoyl cysteine lipidation. C20 is lipidated: S-diacylglycerol cysteine. One can recognise a Fe/B12 periplasmic-binding domain in the interval 51-322; it reads RVVVLELGFI…ELQKEMPAAK (272 aa).

Belongs to the bacterial solute-binding protein 8 family. In terms of assembly, interacts with FloT.

It localises to the cell membrane. The protein resides in the membrane raft. This chain is Putative ABC transporter substrate-binding lipoprotein YhfQ (yhfQ), found in Bacillus subtilis (strain 168).